We begin with the raw amino-acid sequence, 797 residues long: Speckle targeted PIP5K1A-regulated poly(A) polymerase (797 aa).

The segment at Phe-14–Leu-44 adopts a Matrin-type zinc-finger fold. One can recognise an RRM domain in the interval Asn-54–Lys-126. Ser-205 serves as a coordination point for ATP. Mg(2+)-binding residues include Asp-216 and Asp-218. Residues Asp-216, Asp-218, Asn-319, Arg-341, Tyr-363, and His-495 each coordinate UTP. Asn-319 is an ATP binding site. Residues Asp-421 to His-495 enclose the PAP-associated domain. The KA1; binds the bulging loops of U6 snRNA but is dispensable for terminal uridylyltransferase activity stretch occupies residues Gln-544–Met-787. The segment at Glu-611 to Thr-659 is disordered. Positions Ser-615–Ser-624 are enriched in basic and acidic residues. Over residues Glu-627–Gln-640 the composition is skewed to polar residues.

It belongs to the DNA polymerase type-B-like family. As to quaternary structure, associates with the cleavage and polyadenylation specificity factor (CPSF) complex. Mg(2+) is required as a cofactor. Requires Mn(2+) as cofactor.

It localises to the nucleus. Its subcellular location is the nucleolus. It is found in the nucleus speckle. The enzyme catalyses RNA(n) + UTP = RNA(n)-3'-uridine ribonucleotide + diphosphate. It carries out the reaction RNA(n) + ATP = RNA(n)-3'-adenine ribonucleotide + diphosphate. Functionally, poly(A) polymerase that creates the 3'-poly(A) tail of specific pre-mRNAs. In addition to polyadenylation, it is also required for the 3'-end cleavage of pre-mRNAs: binds to the 3'UTR of targeted pre-mRNAs and promotes the recruitment and assembly of the CPSF complex on the 3'UTR of pre-mRNAs. In addition to adenylyltransferase activity, also has uridylyltransferase activity. However, the ATP ratio is higher than UTP in cells, suggesting that it functions primarily as a poly(A) polymerase. The chain is Speckle targeted PIP5K1A-regulated poly(A) polymerase (tut1) from Danio rerio (Zebrafish).